Reading from the N-terminus, the 348-residue chain is Mamu class I histocompatibility antigen, alpha chain F (348 aa).

Residues 1–21 (MAPRTLLLVLSGALALTETWA) form the signal peptide. The tract at residues 22 to 113 (GSHSLRYFST…LLLRYNQSEA (92 aa)) is alpha-1. Residues 22–307 (GSHSLRYFST…ESSSQPTIPI (286 aa)) are Extracellular-facing. A glycan (N-linked (GlcNAc...) asparagine) is linked at Asn109. The alpha-2 stretch occupies residues 114–205 (GSHTLQGMNG…ENGKETLQRA (92 aa)). 2 cysteine pairs are disulfide-bonded: Cys124/Cys187 and Cys226/Cys282. The alpha-3 stretch occupies residues 206–297 (DPPKAHVAHH…GLPQPLTLRW (92 aa)). Residues 208–296 (PKAHVAHHPI…EGLPQPLTLR (89 aa)) form the Ig-like C1-type domain. Positions 298 to 307 (ESSSQPTIPI) are connecting peptide. Residues 308–331 (VGIVAGLAVLAVVVTGAVVAAVMW) form a helical membrane-spanning segment. The Cytoplasmic segment spans residues 332-348 (RRKSSDRNRGSYSQPTM).

Belongs to the MHC class I family. In terms of assembly, heterodimer of an alpha chain and a beta chain (beta-2-microglobulin).

The protein localises to the membrane. Functionally, involved in the presentation of foreign antigens to the immune system. This Macaca mulatta (Rhesus macaque) protein is Mamu class I histocompatibility antigen, alpha chain F (Mamu-F).